The following is a 179-amino-acid chain: MAEERSQRSRDRSREEKIDDGMIEKLVAVNRVSKTVKGGRQFTFTALTIVGNGEGSVGFGYGKAREVPVAIQKSMEYARKRMANVSLNNGTLWHPVKANHGAASVFMKPASEGTGVIAGGAMRAVLEAVGVKDVLAKAIGSRNPINLVRATLKGLEDMQSPTHIALKRGKNVRDFSHGS.

The S5 DRBM domain occupies Met22 to Val85.

This sequence belongs to the universal ribosomal protein uS5 family. In terms of assembly, part of the 30S ribosomal subunit. Contacts proteins S4 and S8.

Its function is as follows. With S4 and S12 plays an important role in translational accuracy. Located at the back of the 30S subunit body where it stabilizes the conformation of the head with respect to the body. The polypeptide is Small ribosomal subunit protein uS5 (Xylella fastidiosa (strain M12)).